The primary structure comprises 352 residues: Mitochondrial ubiquitin ligase activator of NFKB 1 (352 aa).

At 1–8 (MENGGRPS) the chain is on the cytoplasmic side. A helical transmembrane segment spans residues 9–29 (LCQFILLGTTSVVTAALYSVY). Over 30–238 (RQKAWVSQEL…LLQRQESSVR (209 aa)) the chain is Mitochondrial intermembrane. Lys-52 is covalently cross-linked (Glycyl lysine isopeptide (Lys-Gly) (interchain with G-Cter in ubiquitin)). The helical transmembrane segment at 239–259 (LWKVLALVFGFATCATLFFIL) threads the bilayer. Over 260-352 (RKQYLQRQER…ITRVIPLYNS (93 aa)) the chain is Cytoplasmic. Residues Lys-273 and Lys-299 each participate in a glycyl lysine isopeptide (Lys-Gly) (interchain with G-Cter in ubiquitin) cross-link. The RING-type zinc-finger motif lies at 302 to 340 (CVVCLSSFKSCVFLECGHVCSCTECYRALPEPKKCPICR).

As to quaternary structure, homooligomer. Interacts with MAP3K7/TAK1. Interacts with UBC9. Interacts with and sumoylates DNM1L. Interacts with MAVS. Interacts with TP53 (via N-terminus); the interaction leads to ubiquitination and proteasomal degradation of TP53. In terms of processing, ubiquitinated by PRKN during mitophagy, leading to its degradation and enhancement of mitophagy. Deubiquitinated by USP30.

Its subcellular location is the mitochondrion outer membrane. The protein localises to the peroxisome. It carries out the reaction S-ubiquitinyl-[E2 ubiquitin-conjugating enzyme]-L-cysteine + [acceptor protein]-L-lysine = [E2 ubiquitin-conjugating enzyme]-L-cysteine + N(6)-ubiquitinyl-[acceptor protein]-L-lysine.. The protein operates within protein modification; protein ubiquitination. It participates in protein modification; protein sumoylation. Its function is as follows. Exhibits weak E3 ubiquitin-protein ligase activity. E3 ubiquitin ligases accept ubiquitin from an E2 ubiquitin-conjugating enzyme in the form of a thioester and then directly transfer the ubiquitin to targeted substrates. Can ubiquitinate AKT1 preferentially at 'Lys-284' involving 'Lys-48'-linked polyubiquitination and seems to be involved in regulation of Akt signaling by targeting phosphorylated Akt to proteasomal degradation. Mediates polyubiquitination of cytoplasmic TP53 at 'Lys-24' which targets TP53 for proteasomal degradation, thus reducing TP53 levels in the cytoplasm and mitochondrion. Proposed to preferentially act as a SUMO E3 ligase at physiological concentrations. Plays a role in the control of mitochondrial morphology by promoting mitochondrial fragmentation, and influences mitochondrial localization. Likely to promote mitochondrial fission through negatively regulating the mitochondrial fusion proteins MFN1 and MFN2, acting in a pathway that is parallel to the PRKN/PINK1 regulatory pathway. May also be involved in the sumoylation of the membrane fission protein DNM1L. Inhibits cell growth. When overexpressed, activates JNK through MAP3K7/TAK1 and induces caspase-dependent apoptosis. Involved in the modulation of innate immune defense against viruses by inhibiting RIGI-dependent antiviral response. Can mediate RIGI sumoylation and disrupt its polyubiquitination. This is Mitochondrial ubiquitin ligase activator of NFKB 1 (MUL1) from Macaca fascicularis (Crab-eating macaque).